Consider the following 599-residue polypeptide: Replication protein E1 (599 aa).

Residues 78-80 carry the Nuclear localization signal motif; it reads KRK. A phosphoserine; by host mark is found at Ser-84 and Ser-93. Residues 92 to 101 carry the Nuclear export signal motif; that stretch reads LSPQLQAVKI. Residues 124–140 are compositionally biased toward polar residues; it reads NSLTQVESESQAGPSSQ. Residues 124 to 144 are disordered; sequence NSLTQVESESQAGPSSQDGGG. The tract at residues 139 to 303 is DNA-binding region; sequence SQDGGGDINL…LVSHQAATTA (165 aa). An SF3 helicase domain is found at 402-552; it reads VNILSFLIVL…MPILDDGSPM (151 aa). 428–435 contributes to the ATP binding site; the sequence is GPPDTGKS. A Glycyl lysine isopeptide (Lys-Gly) (interchain with G-Cter in SUMO) cross-link involves residue Lys-509. The segment at 575-599 is disordered; the sequence is DPEEENNGVPSRTFRCTSRSNSDSY. Residues 582-599 show a composition bias toward polar residues; it reads GVPSRTFRCTSRSNSDSY.

This sequence belongs to the papillomaviridae E1 protein family. Can form hexamers. Interacts with E2 protein; this interaction increases E1 DNA binding specificity. Interacts with host DNA polymerase subunit POLA2. Interacts with host single stranded DNA-binding protein RPA1. Interacts with host TOP1; this interaction stimulates the enzymatic activity of TOP1. In terms of processing, phosphorylated. Post-translationally, sumoylated.

It localises to the host nucleus. The catalysed reaction is Couples ATP hydrolysis with the unwinding of duplex DNA by translocating in the 3'-5' direction.. It carries out the reaction ATP + H2O = ADP + phosphate + H(+). Its function is as follows. ATP-dependent DNA 3'-5' helicase required for initiation of viral DNA replication. It forms a complex with the viral E2 protein. The E1-E2 complex binds to the replication origin which contains binding sites for both proteins. During the initial step, a dimer of E1 interacts with a dimer of protein E2 leading to a complex that binds the viral origin of replication with high specificity. Then, a second dimer of E1 displaces the E2 dimer in an ATP-dependent manner to form the E1 tetramer. Following this, two E1 monomers are added to each half of the site, which results in the formation of two E1 trimers on the viral ori. Subsequently, two hexamers will be created. The double hexamer acts as a bi-directional helicase machinery and unwinds the viral DNA and then recruits the host DNA polymerase to start replication. This chain is Replication protein E1, found in Homo sapiens (Human).